Here is a 539-residue protein sequence, read N- to C-terminus: Chaperonin GroEL (539 aa).

Residues 29 to 32 (TLGP), 86 to 90 (DGTTT), glycine 413, and aspartate 492 each bind ATP.

Belongs to the chaperonin (HSP60) family. In terms of assembly, forms a cylinder of 14 subunits composed of two heptameric rings stacked back-to-back. Interacts with the co-chaperonin GroES.

It localises to the cytoplasm. It carries out the reaction ATP + H2O + a folded polypeptide = ADP + phosphate + an unfolded polypeptide.. In terms of biological role, together with its co-chaperonin GroES, plays an essential role in assisting protein folding. The GroEL-GroES system forms a nano-cage that allows encapsulation of the non-native substrate proteins and provides a physical environment optimized to promote and accelerate protein folding. The polypeptide is Chaperonin GroEL (Fusobacterium nucleatum subsp. nucleatum (strain ATCC 25586 / DSM 15643 / BCRC 10681 / CIP 101130 / JCM 8532 / KCTC 2640 / LMG 13131 / VPI 4355)).